Consider the following 214-residue polypeptide: Outer-membrane lipoprotein LolB (214 aa).

The signal sequence occupies residues 1–25 (MNNLKRFTKSIFSCIALSGLLFLGG). C26 carries the N-palmitoyl cysteine lipid modification. The S-diacylglycerol cysteine moiety is linked to residue C26.

Belongs to the LolB family. As to quaternary structure, monomer.

The protein localises to the cell outer membrane. Plays a critical role in the incorporation of lipoproteins in the outer membrane after they are released by the LolA protein. This is Outer-membrane lipoprotein LolB from Shewanella sp. (strain MR-4).